The chain runs to 213 residues: Pyrrolidone-carboxylate peptidase (213 aa).

Catalysis depends on residues Glu-81, Cys-144, and His-166.

This sequence belongs to the peptidase C15 family. As to quaternary structure, homodimer.

The protein resides in the cytoplasm. It catalyses the reaction Release of an N-terminal pyroglutamyl group from a polypeptide, the second amino acid generally not being Pro.. Functionally, removes 5-oxoproline from various penultimate amino acid residues except L-proline. In Pseudomonas fluorescens, this protein is Pyrrolidone-carboxylate peptidase (pcp).